A 260-amino-acid chain; its full sequence is DNA-binding protein RFXANK (260 aa).

The interval 1 to 79 is disordered; sequence MELTQPAEDL…STTLTNRQRG (79 aa). Residues 22–33 show a composition bias toward acidic residues; the sequence is GDPEDPGEEAAD. Residues 57–77 are compositionally biased toward polar residues; it reads SVSSPQAGSSLKHSTTLTNRQ. 5 ANK repeats span residues 89-118, 123-152, 156-185, 189-218, and 222-251; these read LDSL…NLVN, RGFT…DPHI, ERES…DINI, NGGT…DLTT, and SGYT…KLFQ.

As to quaternary structure, forms homodimers. The RFX heterotetrameric complex consists of 2 molecules of RFX5 and one each of RFXAP and RFX-B/RFXANK; with each subunit representing a separate complementation group. Interacts (via ankyrin repeats) with RFX5 (via PxLPxI/L motif); the interaction is direct. RFX forms cooperative DNA binding complexes with X2BP and CBF/NF-Y. RFX associates with CIITA to form an active transcriptional complex. Interacts with RAF1. Interacts (via ankyrin repeats) with RFX7 (via PxLPxI/L motif). Phosphorylated by RAF1. In terms of tissue distribution, ubiquitous.

It is found in the cytoplasm. The protein localises to the nucleus. Its function is as follows. Activates transcription from class II MHC promoters. Activation requires the activity of the MHC class II transactivator/CIITA. May regulate other genes in the cell. RFX binds the X1 box of MHC-II promoters. May also potentiate the activation of RAF1. In terms of biological role, isoform 2 is not involved in the positive regulation of MHC class II genes. The chain is DNA-binding protein RFXANK (RFXANK) from Homo sapiens (Human).